A 527-amino-acid chain; its full sequence is UDP-glucuronosyltransferase 2A1 (527 aa).

Positions M1 to G20 are cleaved as a signal peptide. The Extracellular segment spans residues G21–D490. N49 is a glycosylation site (N-linked (GlcNAc...) asparagine). K134 bears the N6-succinyllysine mark. N313 carries N-linked (GlcNAc...) asparagine glycosylation. Residues V491 to I507 form a helical membrane-spanning segment. Residues K508–D527 lie on the Cytoplasmic side of the membrane.

It belongs to the UDP-glycosyltransferase family. In terms of tissue distribution, olfactory epithelium. Mainly found in the sustentacular cells and to a lesser extent in Bowman's gland cells. Also expressed in the olfactory sensory neuron nuclei. Neuronal localization within the olfactory bulb is mainly found in the deeper granular cells.

It is found in the membrane. The catalysed reaction is glucuronate acceptor + UDP-alpha-D-glucuronate = acceptor beta-D-glucuronoside + UDP + H(+). It catalyses the reaction 16beta,17beta-estriol + UDP-alpha-D-glucuronate = 16beta,17beta-estriol 16-O-(beta-D-glucuronate) + UDP + H(+). The enzyme catalyses 16alpha,17alpha-estriol + UDP-alpha-D-glucuronate = 16alpha,17alpha-estriol 16-O-(beta-D-glucuronate) + UDP + H(+). It carries out the reaction 17alpha-estradiol + UDP-alpha-D-glucuronate = 17alpha-estradiol 17-O-(beta-D-glucuronate) + UDP + H(+). The catalysed reaction is 17alpha-estradiol + UDP-alpha-D-glucuronate = 17alpha-estradiol 3-O-(beta-D-glucuronate) + UDP + H(+). It catalyses the reaction 17beta-estradiol + UDP-alpha-D-glucuronate = 17beta-estradiol 3-O-(beta-D-glucuronate) + UDP + H(+). The enzyme catalyses 17beta-estradiol + UDP-alpha-D-glucuronate = 17beta-estradiol 17-O-(beta-D-glucuronate) + UDP + H(+). It carries out the reaction testosterone + UDP-alpha-D-glucuronate = testosterone 17-O-(beta-D-glucuronate) + UDP + H(+). The catalysed reaction is epitestosterone + UDP-alpha-D-glucuronate = epitestosterone 17-O-(beta-D-glucuronate) + UDP + H(+). It catalyses the reaction lithocholate + UDP-alpha-D-glucuronate = lithocholoyl-3-O-(beta-D-glucuronate) + UDP + H(+). The enzyme catalyses lithocholate + UDP-alpha-D-glucuronate = lithocholoyl-24-O-(beta-D-glucuronate) + UDP. It carries out the reaction deoxycholate + UDP-alpha-D-glucuronate = deoxycholoyl-24-O-(beta-D-glucuronate) + UDP. The catalysed reaction is hyodeoxycholate + UDP-alpha-D-glucuronate = hyodeoxycholate 6-O-(beta-D-glucuronate) + UDP + H(+). It catalyses the reaction hyocholate + UDP-alpha-D-glucuronate = hyocholoyl-24-O-(beta-D-glucuronate) + UDP. In terms of biological role, UDP-glucuronosyltransferase (UGT) that catalyzes phase II biotransformation reactions in which lipophilic substrates are conjugated with glucuronic acid to increase the metabolite's water solubility, thereby facilitating excretion into either the urine or bile. Essential for the elimination and detoxification of drugs, xenobiotics and endogenous compounds. Catalyzes the glucuronidation of endogenous steroid hormones such as androgens (testosterones) and estrogens (estradiol and estriol). Contributes to bile acid (BA) detoxification by catalyzing the glucuronidation of BA substrates, which are natural detergents for dietary lipids absorption. Shows a high affinity to aliphatic odorants such as citronellol as well as olfactory tissue specificity, and therefore may be involved in olfaction. The sequence is that of UDP-glucuronosyltransferase 2A1 from Rattus norvegicus (Rat).